Here is a 272-residue protein sequence, read N- to C-terminus: uncharacterized protein (272 aa).

Residues 1–20 (MMEPKSIFLLGLLLFRVGKL) form the signal peptide.

This is an uncharacterized protein from Caenorhabditis elegans.